Here is a 494-residue protein sequence, read N- to C-terminus: Alpha-amylase-related protein (494 aa).

The signal sequence occupies residues 1–20 (MIKFALALTLCLAGASLSLA). Pyrrolidone carboxylic acid is present on Q21. C48 and C104 form a disulfide bridge. Ca(2+)-binding residues include N118, Q169, and D178. Cysteines 157 and 171 form a disulfide. A chloride-binding site is contributed by R206. The active-site Nucleophile is the D208. A Ca(2+)-binding site is contributed by H212. The Proton donor role is filled by E245. Chloride-binding residues include N308 and R343. 3 cysteine pairs are disulfide-bonded: C376–C382, C418–C441, and C448–C460.

Belongs to the glycosyl hydrolase 13 family. Monomer. Requires Ca(2+) as cofactor. Chloride serves as cofactor.

It is found in the secreted. The catalysed reaction is Endohydrolysis of (1-&gt;4)-alpha-D-glucosidic linkages in polysaccharides containing three or more (1-&gt;4)-alpha-linked D-glucose units.. This is Alpha-amylase-related protein (Amyrel) from Drosophila bocqueti (Fruit fly).